A 267-amino-acid chain; its full sequence is Membrane-spanning 4-domains subfamily A member 10 (267 aa).

The Cytoplasmic portion of the chain corresponds to 1 to 56 (MAGQAPTAVPGSVTGEVSRWQNLGPAQPAQKVAQPQNLVPDGHLEKALEGSDLLQK). Residues 57 to 77 (LGGFHIAIAFAHLAFGGYLIS) form a helical membrane-spanning segment. The Extracellular segment spans residues 78-83 (TVKNLH). A helical transmembrane segment spans residues 84–104 (LVVLKCWYPLWGTVSFLVAGM). Residues 105-118 (AAMTTVTFPKTSLK) lie on the Cytoplasmic side of the membrane. Residues 119–139 (VLCVIANVISLFCALAGFFVI) form a helical membrane-spanning segment. The Extracellular portion of the chain corresponds to 140–168 (AKDLFLEGPFPWPIWRPYPEPTTYIQRLE). Residues 169 to 189 (LTLFCFTFLEIFLSGSTAITA) traverse the membrane as a helical segment. Topologically, residues 190 to 267 (YRMKRLQAED…LHTGPRTLRK (78 aa)) are cytoplasmic.

Belongs to the MS4A family. As to expression, expressed in thymus, kidney, colon, brain and testis. Expressed also by various hematopoietic and lymphoblastoid cell lines.

Its subcellular location is the membrane. Its function is as follows. May be involved in signal transduction as a component of a multimeric receptor complex. This chain is Membrane-spanning 4-domains subfamily A member 10 (Ms4a10), found in Mus musculus (Mouse).